The following is a 299-amino-acid chain: Pyridoxal 5'-phosphate synthase subunit PdxS (299 aa).

Asp-24 contacts D-ribose 5-phosphate. Lys-81 serves as the catalytic Schiff-base intermediate with D-ribose 5-phosphate. Gly-153 contributes to the D-ribose 5-phosphate binding site. Arg-165 serves as a coordination point for D-glyceraldehyde 3-phosphate. D-ribose 5-phosphate-binding positions include Gly-219 and 240-241 (GS).

It belongs to the PdxS/SNZ family. In the presence of PdxT, forms a dodecamer of heterodimers.

The catalysed reaction is aldehydo-D-ribose 5-phosphate + D-glyceraldehyde 3-phosphate + L-glutamine = pyridoxal 5'-phosphate + L-glutamate + phosphate + 3 H2O + H(+). Its pathway is cofactor biosynthesis; pyridoxal 5'-phosphate biosynthesis. Its function is as follows. Catalyzes the formation of pyridoxal 5'-phosphate from ribose 5-phosphate (RBP), glyceraldehyde 3-phosphate (G3P) and ammonia. The ammonia is provided by the PdxT subunit. Can also use ribulose 5-phosphate and dihydroxyacetone phosphate as substrates, resulting from enzyme-catalyzed isomerization of RBP and G3P, respectively. This chain is Pyridoxal 5'-phosphate synthase subunit PdxS, found in Methanococcus maripaludis (strain C7 / ATCC BAA-1331).